The primary structure comprises 412 residues: MTESTTDPARQNLDPTSPAPATSFPQDRGCPYHPPAGYAPLREGRPLSRVTLFDGRPVWAVTGHALARRLLADPRLSTDRSHPDFPVPAERFAGAQRRRVALLGVDDPEHNTQRRMLIPTFSVKRIGALRPRIQETVDRLLDAMERQGPPAELVSAFALPVPSMVICALLGVPYADHAFFEERSQRLLRGPGADDVNRARDELEEYLGALIDRKRAEPGDGLLDELIHRDHPDGPVDREQLVAFAVILLIAGHETTANMISLGTFTLLSHPEQLAALRAGGTSTAVVVEELLRFLSIAEGLQRLATEDMEVDGATIRKGEGVVFSTSLINRDADVFPRAETLDWDRPARHHLAFGFGVHQCLGQNLARAELDIAMRTLFERLPGLRLAVPAHEIRHKPGDTIQGLLDLPVAW.

The segment covering 1 to 25 (MTESTTDPARQNLDPTSPAPATSFP) has biased composition (polar residues). The tract at residues 1–38 (MTESTTDPARQNLDPTSPAPATSFPQDRGCPYHPPAGY) is disordered. Residue cysteine 361 coordinates heme.

This sequence belongs to the cytochrome P450 family. Heme serves as cofactor.

The protein localises to the cytoplasm. In Streptomyces griseus, this protein is Cytochrome P450-SOY (cyp105D1).